Reading from the N-terminus, the 90-residue chain is UPF0237 protein PAE3582 (90 aa).

An ACT domain is found at 5–74 (VVSVLGADRV…LEEEGKRLGV (70 aa)).

It belongs to the UPF0237 family.

This is UPF0237 protein PAE3582 from Pyrobaculum aerophilum (strain ATCC 51768 / DSM 7523 / JCM 9630 / CIP 104966 / NBRC 100827 / IM2).